Consider the following 331-residue polypeptide: Cytosolic sulfotransferase 1 (331 aa).

3'-phosphoadenylyl sulfate is bound at residue 74–79 (KSGTTW). Residue His-143 is the Proton acceptor of the active site. 3'-phosphoadenylyl sulfate is bound by residues Arg-165, Ser-173, Tyr-231, and 297–299 (RKG).

The protein belongs to the sulfotransferase 1 family.

It is found in the cytoplasm. Functionally, sulfotransferase that utilizes 3'-phospho-5'-adenylyl sulfate (PAPS) as sulfonate donor. The chain is Cytosolic sulfotransferase 1 (SOT1) from Arabidopsis thaliana (Mouse-ear cress).